The chain runs to 324 residues: AT-hook motif nuclear-localized protein 24 (324 aa).

A compositionally biased stretch (polar residues) spans 1–12 (MDPVQSHGSQSS). Disordered regions lie at residues 1-122 (MDPV…KPPI) and 262-324 (MQTP…RPPY). Residues 24-33 (LHLQQQQQEF) are compositionally biased toward low complexity. Positions 69 to 79 (NIDNIANNSGS) are enriched in polar residues. A compositionally biased stretch (gly residues) spans 88–99 (GGSGEGGGGSGG). Positions 105–117 (RRPRGRPAGSKNK) form a DNA-binding region, a.T hook. A PPC domain is found at 129–268 (ANALRTHVME…EDEMQTPVHG (140 aa)). A compositionally biased stretch (low complexity) spans 280 to 297 (MMGQQLQHQQQAMSGHQG). Over residues 304 to 318 (GSVQLQQQHDQSYWS) the composition is skewed to polar residues.

The protein resides in the nucleus. In terms of biological role, transcription factor that specifically binds AT-rich DNA sequences related to the nuclear matrix attachment regions (MARs). The polypeptide is AT-hook motif nuclear-localized protein 24 (Arabidopsis thaliana (Mouse-ear cress)).